The primary structure comprises 382 residues: Protein phosphatase 1A (382 aa).

G2 carries the N-myristoyl glycine lipid modification. In terms of domain architecture, PPM-type phosphatase spans 23-291 (RYGLSSMQGW…DNMSVILICF (269 aa)). D60, G61, D239, and D282 together coordinate Mn(2+). 2 positions are modified to phosphoserine: S375 and S377.

It belongs to the PP2C family. In terms of assembly, monomer. Interacts with SMAD2; the interaction dephosphorylates SMAD2 in its C-terminal SXS motif resulting in disruption of the SMAD2/SMAD4 complex, SMAD2 nuclear export and termination of the TGF-beta-mediated signaling. Interacts with SMAD2; the interaction dephosphorylates SMAD2 in its C-terminal SXS motif resulting in disruption of the SMAD2/SMAD4 complex, SMAD2 nuclear export and termination of the TGF-beta-mediated signaling. Interacts with the phosphorylated form of IKBKB/IKKB. It depends on Mg(2+) as a cofactor. Requires Mn(2+) as cofactor. N-myristoylation is essential for the recognition of its substrates for dephosphorylation.

The protein resides in the nucleus. The protein localises to the cytoplasm. Its subcellular location is the cytosol. It localises to the membrane. It carries out the reaction O-phospho-L-seryl-[protein] + H2O = L-seryl-[protein] + phosphate. The catalysed reaction is O-phospho-L-threonyl-[protein] + H2O = L-threonyl-[protein] + phosphate. Functionally, enzyme with a broad specificity. Negatively regulates TGF-beta signaling through dephosphorylating SMAD2 and SMAD3, resulting in their dissociation from SMAD4, nuclear export of the SMADs and termination of the TGF-beta-mediated signaling. Dephosphorylates PRKAA1 and PRKAA2. Plays an important role in the termination of TNF-alpha-mediated NF-kappa-B activation through dephosphorylating and inactivating IKBKB/IKKB. The chain is Protein phosphatase 1A (PPM1A) from Bos taurus (Bovine).